We begin with the raw amino-acid sequence, 582 residues long: Hydrazine dehydrogenase (582 aa).

The N-terminal stretch at 1–32 (MRKFLKVTLASALIGCGVIGTVSSLMVKEAKA) is a signal peptide. Cys-121, Cys-124, His-125, His-141, Cys-151, Cys-154, His-155, His-159, Cys-170, Cys-175, His-176, His-191, Cys-216, Cys-219, His-220, Cys-227, Cys-230, His-231, His-234, Cys-247, Cys-250, His-251, His-267, Cys-297, Cys-300, His-301, His-306, Cys-342, Cys-345, His-346, His-454, and Tyr-462 together coordinate heme c. The disordered stretch occupies residues 561–582 (GSHSAHHHESGHDPAARSMKEH). The span at 567 to 582 (HHESGHDPAARSMKEH) shows a compositional bias: basic and acidic residues.

In terms of assembly, homotrimer; subunits are linked by two covalent bonds between Tyr-462 of one subunit and heme P460 of an adjacent subunit. May form 24-mer of an octamer of trimers. It depends on heme c as a cofactor.

The protein resides in the anammoxosome. The catalysed reaction is hydrazine + 4 Fe(III)-[cytochrome c] = N2 + 4 Fe(II)-[cytochrome c] + 4 H(+). It participates in nitrogen metabolism. With respect to regulation, is strongly and competitively inhibited by NO and hydroxylamine. Functionally, catalyzes the four-electron oxidation of hydrazine to N2. The electrons derived from hydrazine oxidation may be transferred to the quinone pool and exploited to promote the generation of proton-motive force (pmf) across the anammoxosome membrane. Is involved in anaerobic ammonium oxidation (anammox), a biological process in which nitrite is used as the electron acceptor in the conversion of ammonium to dinitrogen gas (N2) and water; this bacterial process has a major role in the Earth's nitrogen cycle and has been estimated to synthesize up to 50% of the dinitrogen gas emitted into our atmosphere from the oceans. Cannot oxidize hydroxylamine to NO. This Kuenenia stuttgartiensis protein is Hydrazine dehydrogenase.